We begin with the raw amino-acid sequence, 257 residues long: Probable amino-acid ABC transporter ATP-binding protein y4tH (257 aa).

The region spanning Ile-6–Leu-251 is the ABC transporter domain. Gly-38–Ser-45 lines the ATP pocket.

The protein belongs to the ABC transporter superfamily.

It localises to the cell inner membrane. Functionally, probably part of a binding-protein-dependent transport system y4tEFGH for an amino acid. Probably responsible for energy coupling to the transport system. The protein is Probable amino-acid ABC transporter ATP-binding protein y4tH of Sinorhizobium fredii (strain NBRC 101917 / NGR234).